The sequence spans 122 residues: Putative iron-sulfur cluster insertion protein ErpA (122 aa).

Iron-sulfur cluster-binding residues include Cys50, Cys114, and Cys116.

This sequence belongs to the HesB/IscA family. Homodimer. Requires iron-sulfur cluster as cofactor.

Required for insertion of 4Fe-4S clusters. This chain is Putative iron-sulfur cluster insertion protein ErpA, found in Cupriavidus metallidurans (strain ATCC 43123 / DSM 2839 / NBRC 102507 / CH34) (Ralstonia metallidurans).